Reading from the N-terminus, the 215-residue chain is uncharacterized protein (215 aa).

5 helical membrane passes run 9 to 29, 50 to 70, 77 to 97, 107 to 127, and 160 to 180; these read WTFY…TIEG, LTVG…TSLF, IGAL…NFIL, IIVF…YVSA, and ILFA…LTAI.

The protein resides in the cell membrane. This is an uncharacterized protein from Bacillus subtilis (strain 168).